The chain runs to 406 residues: MKELLRKWNNISLVKRILMGLIIGIMLALWIPDIAAPVAILGNLFVGALKAVAPVLVLILVMGAIANHKSGQQTNMKSILILYLLGTFLAGVTAVIASFMFPVSIALAAGAEDITAPGGITEVLLSLLMNVVDNPVKALMNANYIGILSWAILLGLALRTAGESTKQLIGDFADAVSKVVKWVINLAPLGILGLVFDSIATSGLEVLLGYGKLLLLLVGCMVFVALIINPLIVYLKIRKNPYPLVFRCLRESGITAFFTRSSAANIPVNLTLCEKLGLDRNTYSISIPLGATINMAGAAVTIAVLTLAAVHTLGITVDIPTAIILSVLSAIAACGASGVAGGSLLLIPLACSLFGISNDIAMQVVGVGFIIGVVQDSCETALNSSTDVLFTAAAEYGEWRKEGKAF.

The next 9 membrane-spanning stretches (helical) occupy residues 21 to 41 (LIIG…VAIL), 45 to 65 (FVGA…MGAI), 79 to 99 (ILIL…IASF), 138 to 158 (ALMN…GLAL), 179 to 199 (VVKW…FDSI), 213 to 233 (LLLL…PLIV), 285 to 305 (ISIP…IAVL), 313 to 333 (LGIT…AIAA), and 360 to 380 (IAMQ…SCET).

Belongs to the dicarboxylate/amino acid:cation symporter (DAACS) (TC 2.A.23) family.

Its subcellular location is the cell membrane. The catalysed reaction is L-serine(in) + Na(+)(in) = L-serine(out) + Na(+)(out). It carries out the reaction L-threonine(in) + Na(+)(in) = L-threonine(out) + Na(+)(out). In terms of biological role, involved in the import of serine and threonine into the cell, with the concomitant import of sodium (symport system). In Desulfitobacterium hafniense (strain Y51), this protein is Serine/threonine transporter SstT.